Consider the following 270-residue polypeptide: 3-methyl-2-oxobutanoate hydroxymethyltransferase (270 aa).

Mg(2+) contacts are provided by Asp-41 and Asp-80. 3-methyl-2-oxobutanoate contacts are provided by residues 41 to 42 (DS), Asp-80, and Lys-109. Glu-111 contacts Mg(2+). Glu-178 serves as the catalytic Proton acceptor.

The protein belongs to the PanB family. Homodecamer; pentamer of dimers. Mg(2+) serves as cofactor.

The protein resides in the cytoplasm. The catalysed reaction is 3-methyl-2-oxobutanoate + (6R)-5,10-methylene-5,6,7,8-tetrahydrofolate + H2O = 2-dehydropantoate + (6S)-5,6,7,8-tetrahydrofolate. It participates in cofactor biosynthesis; (R)-pantothenate biosynthesis; (R)-pantoate from 3-methyl-2-oxobutanoate: step 1/2. In terms of biological role, catalyzes the reversible reaction in which hydroxymethyl group from 5,10-methylenetetrahydrofolate is transferred onto alpha-ketoisovalerate to form ketopantoate. The protein is 3-methyl-2-oxobutanoate hydroxymethyltransferase of Thermotoga sp. (strain RQ2).